Consider the following 469-residue polypeptide: MSAPRTLYDKIWDDHLVDSQDDGTCLLYIDRHLVHEVTSPQAFEGLRMTGRKVRAPEKTLAVVDHNVPTSPDRHLGIKNEESRIQVEALATNAAEFGVQYYSASDKRQGIVHIIGPEQGFTLPGMTIVCGDSHTSTHGAFGSLAHGIGTSEVEHVLATQTLIQKKAKNMLVRVDGQLPAGVTAKDIILAIIGEIGTAGGTGYVIEYAGEAIRALSMEGRMTICNMSIEGGARAGLIAPDETTFEYIKGKPRSPTGEALEQAIAYWKTLQTDEGAHYDRVVVLDAAALPPIVSWGSSPEDVVSVQGIVPNPDEIQDENKRTSKWRALDYMGLKPGTPMTEINIDRVFIGSCTNGRIEDLRAVAKVVEGKTVASTVDAMIVPGSGLVKEQAEAEGLDKIFKAAGFDWREPGCSMCLAMNDDRLKPGERCASTSNRNFEGRQGFKGRTHLVSPAMAAAAAIAGHFVDIREWN.

[4Fe-4S] cluster contacts are provided by C350, C410, and C413.

This sequence belongs to the aconitase/IPM isomerase family. LeuC type 1 subfamily. As to quaternary structure, heterodimer of LeuC and LeuD. Requires [4Fe-4S] cluster as cofactor.

The enzyme catalyses (2R,3S)-3-isopropylmalate = (2S)-2-isopropylmalate. It participates in amino-acid biosynthesis; L-leucine biosynthesis; L-leucine from 3-methyl-2-oxobutanoate: step 2/4. Catalyzes the isomerization between 2-isopropylmalate and 3-isopropylmalate, via the formation of 2-isopropylmaleate. The protein is 3-isopropylmalate dehydratase large subunit of Rhizobium rhizogenes (strain K84 / ATCC BAA-868) (Agrobacterium radiobacter).